The primary structure comprises 582 residues: MARKHAIWRFITLIGTVYCSSQVEHYDTFELEPGDQIILFPFIFKGNNIIALSTTRYRDLDRKRTYLVEDVIDFLGSISHVIWNFTVGRIVCADDNRFQRSFDEIMEGYLKEISLDATKIYMKGNKSFGELLEMIYERMFKFNDKRGNYILKYGSDITKKANDMIEDMPHDLDKKKKEEWEVFLNGIKKCGESFRDTEKWRQLIELEKIACNACKEICLDLKEEELMGLFAEGIMRKSLKVKLGEDEISSRGYLEYITISAKVLLGARKEHGGEVMKELVMQMLLGKKGEEIDKRYVDRVAGVVRERQRRREREIEKNMKELLRDEEKAKSKKKGKKKSVGVSEAKEEEKKESGTEEVEASEEVGIPSVEVGGARRKTGKKSKGDQKRFKIHSRVLRWRKSPEKIKEEWDRGSEERWKGRSLEEIKEQKIVHDITGVLELLRSEDADRFFMDAGEHMKGGSERQRMVAIGALETGGQRMTGVVEVGTFKDGDGCPVVYHLRFRPTSIGSIGDVINPGVVEASDVGRVDEGEECEDADKFVYPKGVRFETVKETGSFQIVWKNPSDTSEVLRRLIVYCRPCVI.

A disordered region spans residues E326 to Q386. Over residues K330–S339 the composition is skewed to basic residues. Over residues E344–G354 the composition is skewed to basic and acidic residues.

This sequence belongs to the UPF0329 family.

This Encephalitozoon cuniculi (strain GB-M1) (Microsporidian parasite) protein is UPF0329 protein ECU07_0070.